Reading from the N-terminus, the 150-residue chain is Endoribonuclease YbeY (150 aa).

The Zn(2+) site is built by histidine 113, histidine 117, and histidine 123.

Belongs to the endoribonuclease YbeY family. Zn(2+) serves as cofactor.

The protein localises to the cytoplasm. Single strand-specific metallo-endoribonuclease involved in late-stage 70S ribosome quality control and in maturation of the 3' terminus of the 16S rRNA. The sequence is that of Endoribonuclease YbeY from Wolbachia sp. subsp. Drosophila simulans (strain wRi).